The chain runs to 541 residues: Chaperonin GroEL 2 (541 aa).

Residues 29–32 (TLGP), 86–90 (DGTTT), Gly-414, 478–480 (DAA), and Asp-494 each bind ATP.

Belongs to the chaperonin (HSP60) family. In terms of assembly, forms a cylinder of 14 subunits composed of two heptameric rings stacked back-to-back. Interacts with the co-chaperonin GroES.

It localises to the cytoplasm. It catalyses the reaction ATP + H2O + a folded polypeptide = ADP + phosphate + an unfolded polypeptide.. Functionally, together with its co-chaperonin GroES, plays an essential role in assisting protein folding. The GroEL-GroES system forms a nano-cage that allows encapsulation of the non-native substrate proteins and provides a physical environment optimized to promote and accelerate protein folding. The chain is Chaperonin GroEL 2 from Frankia casuarinae (strain DSM 45818 / CECT 9043 / HFP020203 / CcI3).